The following is a 328-amino-acid chain: L-asparaginase (328 aa).

The region spanning Met-1–Asn-320 is the Asparaginase/glutaminase domain. Catalysis depends on Thr-11, which acts as the Nucleophile; O-isoaspartyl threonine intermediate. Positions 11, 53, 54, 85, and 86 each coordinate L-aspartate. Catalysis depends on charge relay system residues Thr-85, Asp-86, Lys-156, and Tyr-274.

Belongs to the asparaginase 1 family. Homodimer.

The enzyme catalyses L-asparagine + H2O = L-aspartate + NH4(+). With respect to regulation, chohan et al. found that divalent metal ions and EDTA do not have any significant effect on enzyme activity, indicating that activity is independent of metal ions. In another study, Hong et al. showed that activity is enhanced by Mg(2+), significantly inhibited by Co(2+) and Ni(2+), and moderately inhibited by Ca(2+), Cu(2+) and EDTA. Unfolding studies suggest that urea cannot induce complete unfolding and inactivation of the enzyme even at a concentration 8 M. However, in the presence of 4 M guanidine hydrochloride, the enzyme structure is unfolded with complete loss of enzyme activity. Catalyzes the hydrolysis of L-asparagine into L-aspartate and ammonia. Also displays D-asparaginase activity, which is about 50% of the L-asparaginase activity. Does not exhibit glutaminase activity. The sequence is that of L-asparaginase from Thermococcus kodakarensis (strain ATCC BAA-918 / JCM 12380 / KOD1) (Pyrococcus kodakaraensis (strain KOD1)).